The primary structure comprises 262 residues: Tryptophan synthase alpha chain (262 aa).

Catalysis depends on proton acceptor residues glutamate 49 and aspartate 60.

It belongs to the TrpA family. In terms of assembly, tetramer of two alpha and two beta chains.

It catalyses the reaction (1S,2R)-1-C-(indol-3-yl)glycerol 3-phosphate + L-serine = D-glyceraldehyde 3-phosphate + L-tryptophan + H2O. The protein operates within amino-acid biosynthesis; L-tryptophan biosynthesis; L-tryptophan from chorismate: step 5/5. Its function is as follows. The alpha subunit is responsible for the aldol cleavage of indoleglycerol phosphate to indole and glyceraldehyde 3-phosphate. This Thermoanaerobacter sp. (strain X514) protein is Tryptophan synthase alpha chain.